The chain runs to 637 residues: Threonine--tRNA ligase (637 aa).

The 61-residue stretch at 1 to 61 folds into the TGS domain; it reads MPNVKLPDGN…KEDCSLIIVT (61 aa). Positions 242–533 are catalytic; sequence DHRKLGKALD…LIEHYAGKLP (292 aa). Zn(2+) is bound by residues C333, H384, and H510.

The protein belongs to the class-II aminoacyl-tRNA synthetase family. Homodimer. Requires Zn(2+) as cofactor.

It localises to the cytoplasm. It carries out the reaction tRNA(Thr) + L-threonine + ATP = L-threonyl-tRNA(Thr) + AMP + diphosphate + H(+). In terms of biological role, catalyzes the attachment of threonine to tRNA(Thr) in a two-step reaction: L-threonine is first activated by ATP to form Thr-AMP and then transferred to the acceptor end of tRNA(Thr). Also edits incorrectly charged L-seryl-tRNA(Thr). This is Threonine--tRNA ligase from Legionella pneumophila subsp. pneumophila (strain Philadelphia 1 / ATCC 33152 / DSM 7513).